Consider the following 274-residue polypeptide: MAINPITRNKIKDYLNSFIQQQLSVYRERSLREFQDVDSYLPSLSKDGDLKPFHASLIPASIMRLNRFERSLSTGLGSTFEECTRLIALDHHAVALRNYDIQAALDQAQWAAIDQLISIIDRGLKHQTPSLNQMLEQIQSIPLTGILETHIVRADLYIQRHDGSELFFEIKSPKPNKGQCLEVMQRLLRIYTIKQQSAVPVKAFYAMAYNPWGISRASYRSSNTKKYTDFSNAVVIGQEFWSLIGEPSTYTELLEIYHEVGLAKSAEITQKLLQ.

This sequence belongs to the TdeIII type II restriction endonuclease family.

The catalysed reaction is Endonucleolytic cleavage of DNA to give specific double-stranded fragments with terminal 5'-phosphates.. In terms of biological role, a P subtype restriction enzyme that recognizes the double-stranded sequence 5'-GGWCC-3' and cleaves after G-1. This system is more active than isoschizomeric RM.HgiBI. This is Type II restriction enzyme HgiEI from Herpetosiphon aurantiacus (Herpetosiphon giganteus).